The following is a 652-amino-acid chain: Acetyl-coenzyme A synthetase (652 aa).

CoA-binding positions include 189-192 and Thr-311; that span reads RGGK. ATP is bound by residues 387-389, 411-416, Asp-500, and Arg-515; these read GEP and DTWWQT. CoA is bound at residue Ser-523. An ATP-binding site is contributed by Arg-526. Val-537, His-539, and Val-542 together coordinate Mg(2+). Arg-584 contributes to the CoA binding site. Residue Lys-609 is modified to N6-acetyllysine.

It belongs to the ATP-dependent AMP-binding enzyme family. Mg(2+) serves as cofactor. Acetylated. Deacetylation by the SIR2-homolog deacetylase activates the enzyme.

It carries out the reaction acetate + ATP + CoA = acetyl-CoA + AMP + diphosphate. Its function is as follows. Catalyzes the conversion of acetate into acetyl-CoA (AcCoA), an essential intermediate at the junction of anabolic and catabolic pathways. AcsA undergoes a two-step reaction. In the first half reaction, AcsA combines acetate with ATP to form acetyl-adenylate (AcAMP) intermediate. In the second half reaction, it can then transfer the acetyl group from AcAMP to the sulfhydryl group of CoA, forming the product AcCoA. In Bartonella henselae (strain ATCC 49882 / DSM 28221 / CCUG 30454 / Houston 1) (Rochalimaea henselae), this protein is Acetyl-coenzyme A synthetase.